Reading from the N-terminus, the 109-residue chain is ATP-dependent Clp protease adapter protein ClpS (109 aa).

This sequence belongs to the ClpS family. As to quaternary structure, binds to the N-terminal domain of the chaperone ClpA.

Involved in the modulation of the specificity of the ClpAP-mediated ATP-dependent protein degradation. The sequence is that of ATP-dependent Clp protease adapter protein ClpS from Lawsonia intracellularis (strain PHE/MN1-00).